The primary structure comprises 257 residues: GTP cyclohydrolase FolE2 (257 aa).

Belongs to the GTP cyclohydrolase IV family.

It catalyses the reaction GTP + H2O = 7,8-dihydroneopterin 3'-triphosphate + formate + H(+). The protein operates within cofactor biosynthesis; 7,8-dihydroneopterin triphosphate biosynthesis; 7,8-dihydroneopterin triphosphate from GTP: step 1/1. Functionally, converts GTP to 7,8-dihydroneopterin triphosphate. The polypeptide is GTP cyclohydrolase FolE2 (Dictyoglomus thermophilum (strain ATCC 35947 / DSM 3960 / H-6-12)).